Here is a 399-residue protein sequence, read N- to C-terminus: MTVGDTTSGSGEEPAADSSVHATPHHEVDHTVEPTDDPLAIRLEALILGADRRYTPFQAARTAGVSMDLASRFWRAMAFADIGQAKALTEADVLALRRLAGLVEAGLLSEPMAIQVARSTGQTTARLAEWQIDSFLEGLTEPPEPGMTRTEVTYPLVELLLPELQEFLVYVWRRQLAAATGRVVQAADDEEMVDRRPRVRFADLVGFTRLTRRLEEEELGELVESFETTAADLVAPTAAGLVKTLGDEVLFAADDAGTAAEIALRLIEAMSQDETMPALRVGIAFGTVTTRMGDVFGTTVNLASRLTSIAPKDAVLVDGAFAKELVRHGEAPESEAQAAEAVAAAAERVRLAEKEGREPDDEPPLPTYRFGLQPMWQRPVRGLGVVEPWLLARRGKTGS.

Residues M1 to S10 are compositionally biased toward polar residues. The segment at M1–T35 is disordered. Basic and acidic residues predominate over residues P24 to E33. The region spanning R198–T307 is the Guanylate cyclase domain. Residues D203 and D247 each contribute to the Mg(2+) site.

This sequence belongs to the adenylyl cyclase class-3 family. It depends on Mg(2+) as a cofactor.

The enzyme catalyses ATP = 3',5'-cyclic AMP + diphosphate. This Streptomyces griseus protein is Adenylate cyclase (cya).